A 516-amino-acid chain; its full sequence is Radial spoke head protein 3 homolog A (516 aa).

Disordered regions lie at residues 1-45 (MAAT…GNPA), 120-139 (STLNQASAMTDPNPRTAEAS), and 190-233 (PTGQ…PVEG). The span at 12 to 25 (AKKRPLHQRARRPA) shows a compositional bias: basic residues. A compositionally biased stretch (polar residues) spans 120–129 (STLNQASAMT). Basic residues predominate over residues 208 to 217 (QARRRALARK). Over residues 218 to 233 (RAQEQLKPRTPEPVEG) the composition is skewed to basic and acidic residues. Position 270 is a phosphothreonine; by MAPK1 (Thr-270). The stretch at 333–369 (YEEIRNVELAEVQRLEEQERRHREEKERRKKQQWEIV) forms a coiled coil. The interval 459–516 (EAMPPGQKTNVINGPNTVTDPSVTTLHTQKPVLDRVSSQPAPSQERKPVEEGGHLMAE) is disordered. Residues 465–486 (QKTNVINGPNTVTDPSVTTLHT) are compositionally biased toward polar residues. Residues 502-516 (QERKPVEEGGHLMAE) are compositionally biased toward basic and acidic residues.

It belongs to the flagellar radial spoke RSP3 family. May be a component of axonemal radial spokes. Interacts with IQUB. Interacts with phosphorylated MAPK1. Interacts with MEK1. Interacts with PKA regulatory subunits PRKAR1A and PRKAR1B. Interacts with RSPH1. Interacts with RSPH4A. Interacts with RSPH6A. Interacts with RSPH9. Interacts with CFAP61. Interacts with LRRC23.

The protein resides in the cytoplasm. The protein localises to the cytoskeleton. Its subcellular location is the cilium axoneme. It localises to the flagellum axoneme. Functionally, may function as part of axonemal radial spoke complexes that play an important part in the motility of sperm and cilia. Functions as a protein kinase A-anchoring protein that scaffolds the cAMP-dependent protein kinase holoenzyme. May serve as a point of convergence for MAPK and PKA signaling in cilia. The protein is Radial spoke head protein 3 homolog A (Rsph3a) of Mus musculus (Mouse).